Reading from the N-terminus, the 219-residue chain is Protein-L-isoaspartate O-methyltransferase 1 (219 aa).

Serine 67 is a catalytic residue.

Belongs to the methyltransferase superfamily. L-isoaspartyl/D-aspartyl protein methyltransferase family.

It localises to the cytoplasm. It carries out the reaction [protein]-L-isoaspartate + S-adenosyl-L-methionine = [protein]-L-isoaspartate alpha-methyl ester + S-adenosyl-L-homocysteine. Its function is as follows. Catalyzes the methyl esterification of L-isoaspartyl residues in peptides and proteins that result from spontaneous decomposition of normal L-aspartyl and L-asparaginyl residues. It plays a role in the repair and/or degradation of damaged proteins. This Geotalea uraniireducens (strain Rf4) (Geobacter uraniireducens) protein is Protein-L-isoaspartate O-methyltransferase 1.